Here is a 255-residue protein sequence, read N- to C-terminus: 5'-nucleotidase SurE (255 aa).

D16, D17, S47, and N100 together coordinate a divalent metal cation.

The protein belongs to the SurE nucleotidase family. It depends on a divalent metal cation as a cofactor.

Its subcellular location is the cytoplasm. The catalysed reaction is a ribonucleoside 5'-phosphate + H2O = a ribonucleoside + phosphate. In terms of biological role, nucleotidase that shows phosphatase activity on nucleoside 5'-monophosphates. The polypeptide is 5'-nucleotidase SurE (Vibrio vulnificus (strain YJ016)).